Here is a 218-residue protein sequence, read N- to C-terminus: Probable transaldolase (218 aa).

K87 (schiff-base intermediate with substrate) is an active-site residue.

It belongs to the transaldolase family. Type 3B subfamily.

Its subcellular location is the cytoplasm. The catalysed reaction is D-sedoheptulose 7-phosphate + D-glyceraldehyde 3-phosphate = D-erythrose 4-phosphate + beta-D-fructose 6-phosphate. It participates in carbohydrate degradation; pentose phosphate pathway; D-glyceraldehyde 3-phosphate and beta-D-fructose 6-phosphate from D-ribose 5-phosphate and D-xylulose 5-phosphate (non-oxidative stage): step 2/3. Its function is as follows. Transaldolase is important for the balance of metabolites in the pentose-phosphate pathway. The protein is Probable transaldolase of Phocaeicola vulgatus (strain ATCC 8482 / DSM 1447 / JCM 5826 / CCUG 4940 / NBRC 14291 / NCTC 11154) (Bacteroides vulgatus).